We begin with the raw amino-acid sequence, 126 residues long: Large ribosomal subunit protein bL17 (126 aa).

Belongs to the bacterial ribosomal protein bL17 family. As to quaternary structure, part of the 50S ribosomal subunit. Contacts protein L32.

In Aliivibrio salmonicida (strain LFI1238) (Vibrio salmonicida (strain LFI1238)), this protein is Large ribosomal subunit protein bL17.